Reading from the N-terminus, the 321-residue chain is Nitrilase blr3397 (321 aa).

A CN hydrolase domain is found at tyrosine 10–leucine 277. Glutamate 50 (proton acceptor) is an active-site residue. Lysine 137 functions as the Proton donor in the catalytic mechanism. Cysteine 171 acts as the Nucleophile in catalysis.

Belongs to the carbon-nitrogen hydrolase superfamily. Nitrilase family. In terms of assembly, homodecamer.

It catalyses the reaction an aliphatic nitrile + 2 H2O = a carboxylate + NH4(+). Its function is as follows. Nitrilase that acts on various kinds of nitrile compounds such as aliphatic and aromatic nitriles. Has higher activity toward aliphatic nitriles compared to aromatic nitriles. Among the different substrates tested, has the highest activity toward hydrocinnamonitrile. This Bradyrhizobium diazoefficiens (strain JCM 10833 / BCRC 13528 / IAM 13628 / NBRC 14792 / USDA 110) protein is Nitrilase blr3397.